The primary structure comprises 525 residues: MGFLQPGHTRPRICCPACCHARCKACGERGERGAVHRACNFKRRTAAVHHRTRPAVLQQYRPAPVESEAWRKAPPSSDRCKNARIFHHGPAGTVEYWSIFGEKKGALRASGSVRALTSTPRGYVVATDQGLWRVRTDTLNSTPDKTQAGKTAKQHQAPVPVRISTQRSCVALFATENMLIALFADGAVRAYDADGENELFSLTLPCTFSSAAQCRVQGDEIVLSDTARAITLSAGGALKWNISLYETPFTPLITTDGLVVSAGGWVLNAYRAETRLIDHTPIYNRDSYFHVLGSSRRAHVQEAPPSRPAAPAKRSPYDSIFSSDPFFSSPAPAKNSGKTDNAQETHTTSPPGPYATPELLLQAVQTSLKEGNVGPREPAYARSLHALLTSPHHARARAPAVTSARRAQAATLLGALGAHEYRDALLELLKEQDYTVLEGILKGLTRCTFGLDERALLALYRVTRAKDARAESLMRAACDALAACARSAPRTLSEKAVSELSRISTGAFPYTIRAYARTLVQSMLR.

2 stretches are compositionally biased toward polar residues: residues 139-149 and 336-349; these read LNSTPDKTQAG and SGKT…HTTS. 2 disordered regions span residues 139 to 158 and 330 to 356; these read LNST…HQAP and PAPA…PYAT.

This is an uncharacterized protein from Treponema pallidum (strain Nichols).